A 179-amino-acid polypeptide reads, in one-letter code: Deoxyuridine 5'-triphosphate nucleotidohydrolase (179 aa).

Residues 90–92 (RSG), asparagine 103, 107–109 (TVD), and lysine 117 each bind substrate.

Belongs to the dUTPase family. The cofactor is Mg(2+).

The enzyme catalyses dUTP + H2O = dUMP + diphosphate + H(+). Its pathway is pyrimidine metabolism; dUMP biosynthesis; dUMP from dCTP (dUTP route): step 2/2. In terms of biological role, this enzyme is involved in nucleotide metabolism: it produces dUMP, the immediate precursor of thymidine nucleotides and it decreases the intracellular concentration of dUTP so that uracil cannot be incorporated into DNA. This chain is Deoxyuridine 5'-triphosphate nucleotidohydrolase, found in Thermobifida fusca (strain YX).